The chain runs to 533 residues: Beta-apo-4'-carotenal oxygenase (533 aa).

Catalysis depends on residues Glu226 and Cys260.

It belongs to the aldehyde dehydrogenase family.

It carries out the reaction 4'-apo-beta-carotenal + NAD(+) + H2O = neurosporaxanthin + NADH + 2 H(+). Functionally, beta-apo-4'-carotenal oxygenase involved in the last step of synthesis of neurosporaxanthin, a carboxylic apocarotenoid acting as an essential protective pigment and leading to orange pigmentation. Converts the aldehyde beta-apo-4'-carotenal into neurosporaxanthin. Neurosporaxanthin is synthesized from geranyl-geranyl pyrophosphate (GGPP) through several enzymatic activities. Phytoene synthase activity performed by the bifunctional enzyme al-2 first produces phytoene from geranyl-geranyl pyrophosphate (GGPP). The phytoene dehydrogenase al-1 then introduces 5 desaturations to lead to 3,4-didehydrolycopene via the intermediates phytofluene, zeta-carotene, neurosporene and lycopene. Al-2 cyclase activity then converts 3,4-didehydrolycopene into torulene. Al-2 can also convet lycopene into gamma-carotene which in turn is converted to beta-carotene by an additional al-2 cyclization reaction. Torulene is the substrate of the dioxidase cao-2 that breaks the molecule, removing five carbon atoms to yield beta-apo-4'-carotenal, whereas the aldehyde dehydrogenase ylo-1 mediates the last step by converting beta-apo-4'-carotenal into neurosporaxanthin. The protein is Beta-apo-4'-carotenal oxygenase of Neurospora crassa (strain ATCC 24698 / 74-OR23-1A / CBS 708.71 / DSM 1257 / FGSC 987).